The chain runs to 394 residues: Acryloyl-CoA reductase (NADH) (394 aa).

FAD is bound by residues 135 to 144 and 170 to 172; these read FALTEPNAGS and FIS. Residue S144 participates in substrate binding. 254–257 is a substrate binding site; it reads DGAR. FAD is bound by residues R282, Q293, and 350 to 354; that span reads QIHGG. E377 (proton acceptor) is an active-site residue. G378 is a binding site for substrate. Position 379–381 (379–381) interacts with FAD; the sequence is TSE.

As to quaternary structure, heterohexadecamer; tetramer of tetramers. Each tetramer is composed of 2 alpha (AcrC), a beta (AcrA) and a gamma (AcrB) subunit. The cofactor is FAD.

It localises to the cytoplasm. It carries out the reaction propanoyl-CoA + NAD(+) = acryloyl-CoA + NADH + H(+). Its function is as follows. Probable catalytic subunit of the acryloyl-CoA reductase complex involved in the pathway of L-alanine fermentation. Catalyzes the irreversible NADH-dependent formation of propionyl-CoA from acryloyl-CoA. It can also use 3-buten-2-one as substrate. In Anaerotignum propionicum (Clostridium propionicum), this protein is Acryloyl-CoA reductase (NADH) (acrC).